The primary structure comprises 287 residues: Lycopene elongase/hydratase (287 aa).

7 helical membrane passes run 15–35 (ISWI…AGEI), 37–57 (WLFW…MYGI), 87–107 (TLLW…FIFG), 137–157 (FIDA…GATI), 166–186 (MWIA…LGAV), 218–238 (LLAA…GIAI), and 265–285 (VFLW…IAIH).

Belongs to the UbiA prenyltransferase family.

It localises to the cell membrane. The catalysed reaction is all-trans-lycopene + dimethylallyl diphosphate + A + H2O = nonaflavuxanthin + AH2 + diphosphate. It carries out the reaction nonaflavuxanthin + dimethylallyl diphosphate + A + H2O = flavuxanthin + AH2 + diphosphate. Its pathway is carotenoid biosynthesis. Catalyzes the elongation of the C(40) carotenoid all-trans-lycopene to the acyclic C(50) carotenoid flavuxanthin during decaprenoxanthin biosynthesis. Acts as a bifunctional enzyme that catalyzes the elongation of lycopene by attaching a C(5) isoprene unit at C-2, as well as the hydroxylation of the new isoprene unit. The enzyme acts at both ends of the substrate, forming the C(50) carotenoid flavuxanthin via the C(45) intermediate nonaflavuxanthin. The polypeptide is Lycopene elongase/hydratase (Corynebacterium glutamicum (strain ATCC 13032 / DSM 20300 / JCM 1318 / BCRC 11384 / CCUG 27702 / LMG 3730 / NBRC 12168 / NCIMB 10025 / NRRL B-2784 / 534)).